Here is a 598-residue protein sequence, read N- to C-terminus: NADH-quinone oxidoreductase subunit C/D (598 aa).

Residues 1–189 (MTDQIAQNSA…DPYVLTKQKE (189 aa)) form an NADH dehydrogenase I subunit C region. The tract at residues 213 to 598 (DFMFLNLGPN…IDFVMSDVDR (386 aa)) is NADH dehydrogenase I subunit D.

This sequence in the N-terminal section; belongs to the complex I 30 kDa subunit family. It in the C-terminal section; belongs to the complex I 49 kDa subunit family. NDH-1 is composed of 13 different subunits. Subunits NuoB, CD, E, F, and G constitute the peripheral sector of the complex.

It is found in the cell inner membrane. It catalyses the reaction a quinone + NADH + 5 H(+)(in) = a quinol + NAD(+) + 4 H(+)(out). In terms of biological role, NDH-1 shuttles electrons from NADH, via FMN and iron-sulfur (Fe-S) centers, to quinones in the respiratory chain. The immediate electron acceptor for the enzyme in this species is believed to be ubiquinone. Couples the redox reaction to proton translocation (for every two electrons transferred, four hydrogen ions are translocated across the cytoplasmic membrane), and thus conserves the redox energy in a proton gradient. The protein is NADH-quinone oxidoreductase subunit C/D of Proteus mirabilis (strain HI4320).